The sequence spans 109 residues: Putative pterin-4-alpha-carbinolamine dehydratase (109 aa).

Belongs to the pterin-4-alpha-carbinolamine dehydratase family.

It carries out the reaction (4aS,6R)-4a-hydroxy-L-erythro-5,6,7,8-tetrahydrobiopterin = (6R)-L-erythro-6,7-dihydrobiopterin + H2O. The sequence is that of Putative pterin-4-alpha-carbinolamine dehydratase from Halorhodospira halophila (strain DSM 244 / SL1) (Ectothiorhodospira halophila (strain DSM 244 / SL1)).